A 435-amino-acid chain; its full sequence is Salicylate hydroxylase (435 aa).

FAD is bound at residue 12–41 (RVAIVGGGISGLALALSLCKHSHLNVQLFE).

FAD is required as a cofactor.

It catalyses the reaction salicylate + NADH + O2 + 2 H(+) = catechol + CO2 + NAD(+) + H2O. It participates in aromatic compound metabolism; naphthalene degradation. This chain is Salicylate hydroxylase (nahG), found in Pseudomonas putida (Arthrobacter siderocapsulatus).